We begin with the raw amino-acid sequence, 329 residues long: Replication factor C small subunit 1 (329 aa).

44 to 51 (GPPGTGKT) serves as a coordination point for ATP.

The protein belongs to the activator 1 small subunits family. RfcS subfamily. In terms of assembly, heteromultimer composed of small subunits (RfcS) and large subunits (RfcL).

Functionally, part of the RFC clamp loader complex which loads the PCNA sliding clamp onto DNA. In Pyrobaculum islandicum (strain DSM 4184 / JCM 9189 / GEO3), this protein is Replication factor C small subunit 1.